We begin with the raw amino-acid sequence, 356 residues long: tRNA N6-adenosine threonylcarbamoyltransferase (356 aa).

Fe cation is bound by residues His115 and His119. Residues 138–142 (LVSGG), Asp171, Gly184, and Asn283 contribute to the substrate site. Asp311 is a binding site for Fe cation.

This sequence belongs to the KAE1 / TsaD family. It depends on Fe(2+) as a cofactor.

Its subcellular location is the cytoplasm. The catalysed reaction is L-threonylcarbamoyladenylate + adenosine(37) in tRNA = N(6)-L-threonylcarbamoyladenosine(37) in tRNA + AMP + H(+). Functionally, required for the formation of a threonylcarbamoyl group on adenosine at position 37 (t(6)A37) in tRNAs that read codons beginning with adenine. Is involved in the transfer of the threonylcarbamoyl moiety of threonylcarbamoyl-AMP (TC-AMP) to the N6 group of A37, together with TsaE and TsaB. TsaD likely plays a direct catalytic role in this reaction. The polypeptide is tRNA N6-adenosine threonylcarbamoyltransferase (Prochlorococcus marinus (strain MIT 9301)).